Here is a 20-residue protein sequence, read N- to C-terminus: Blooming-related protein 2 (20 aa).

The tract at residues 1 to 20 is disordered; the sequence is VSAEYLERQGPKDDXDCFDD.

Functionally, possible 'checkpoint' protein for cell division in the blooming process. The sequence is that of Blooming-related protein 2 from Prorocentrum triestinum (Red tide alga).